Reading from the N-terminus, the 66-residue chain is Large ribosomal subunit protein bL33c (66 aa).

It belongs to the bacterial ribosomal protein bL33 family.

Its subcellular location is the plastid. It is found in the chloroplast. The chain is Large ribosomal subunit protein bL33c from Cucumis sativus (Cucumber).